The sequence spans 471 residues: UDP-N-acetylmuramate--L-alanine ligase (471 aa).

114–120 provides a ligand contact to ATP; that stretch reads GTHGKTT.

This sequence belongs to the MurCDEF family.

The protein resides in the cytoplasm. It carries out the reaction UDP-N-acetyl-alpha-D-muramate + L-alanine + ATP = UDP-N-acetyl-alpha-D-muramoyl-L-alanine + ADP + phosphate + H(+). The protein operates within cell wall biogenesis; peptidoglycan biosynthesis. Cell wall formation. The sequence is that of UDP-N-acetylmuramate--L-alanine ligase from Rhizobium johnstonii (strain DSM 114642 / LMG 32736 / 3841) (Rhizobium leguminosarum bv. viciae).